Here is a 110-residue protein sequence, read N- to C-terminus: Large ribosomal subunit protein uL22 (110 aa).

This sequence belongs to the universal ribosomal protein uL22 family. In terms of assembly, part of the 50S ribosomal subunit.

Functionally, this protein binds specifically to 23S rRNA; its binding is stimulated by other ribosomal proteins, e.g. L4, L17, and L20. It is important during the early stages of 50S assembly. It makes multiple contacts with different domains of the 23S rRNA in the assembled 50S subunit and ribosome. Its function is as follows. The globular domain of the protein is located near the polypeptide exit tunnel on the outside of the subunit, while an extended beta-hairpin is found that lines the wall of the exit tunnel in the center of the 70S ribosome. This is Large ribosomal subunit protein uL22 from Pseudoalteromonas translucida (strain TAC 125).